The following is a 246-amino-acid chain: Transmembrane and ubiquitin-like domain-containing protein 1 (246 aa).

Residues 2-30 (TLIEGVGDEVTVLFSVLACLLVLALAWVS) form a required to release iHOPS from membranes region. Residues 11-31 (VTVLFSVLACLLVLALAWVST) form a helical membrane-spanning segment. The tract at residues 34 to 101 (AEGGDPLPQP…TPPAPDSPQE (68 aa)) is disordered. Over residues 40–50 (LPQPSGTPTPS) the composition is skewed to pro residues. Threonine 71 is subject to Phosphothreonine. Serine 73 carries the phosphoserine modification. At threonine 92 the chain carries Phosphothreonine. 2 positions are modified to phosphoserine: serine 98 and serine 127. The Ubiquitin-like domain occupies 103 to 176 (LVLRLKFLND…LHCHVSTRVG (74 aa)). Transmembrane regions (helical) follow at residues 195-215 (IGSL…YCQI) and 221-241 (FPLT…LLAF).

As to quaternary structure, interacts with EEF1A1, GRIA2, GRIP1, CAMLG, TUBG1. Interacts with NPM1 and CDKN2A; TMUB1 can enhance interaction between NPM1 and CDKN2A and is proposed to bridge the proteins; proposed to be mediated by iHOPS. Interacts with ERLIN2 and AMFR; TMUB1 promotes the interaction of ERLIN2 with AMFR. Processed by regulated intramembrane proteolysis (RIP)in the N-terminus to release iHOPS from membranes. In terms of tissue distribution, ubiquitously expressed with highest levels in mammary and thyroid glands, bone marrow and spleen; limited expression in cardiac, pancreatic and ovarian tissues.

The protein resides in the membrane. It localises to the postsynaptic cell membrane. It is found in the recycling endosome. The protein localises to the cytoplasm. Its subcellular location is the nucleus. The protein resides in the nucleolus. It localises to the cytoskeleton. It is found in the microtubule organizing center. The protein localises to the centrosome. Involved in sterol-regulated ubiquitination and degradation of HMG-CoA reductase HMGCR. Involved in positive regulation of AMPA-selective glutamate receptor GRIA2 recycling to the cell surface. Acts as a negative regulator of hepatocyte growth during regeneration. In terms of biological role, may contribute to the regulation of translation during cell-cycle progression. May contribute to the regulation of cell proliferation. May be involved in centrosome assembly. Modulates stabilization and nucleolar localization of tumor suppressor CDKN2A and enhances association between CDKN2A and NPM1. This is Transmembrane and ubiquitin-like domain-containing protein 1 (TMUB1) from Homo sapiens (Human).